A 306-amino-acid chain; its full sequence is Pantothenate kinase (306 aa).

91–98 provides a ligand contact to ATP; sequence GSVAVGKS.

Belongs to the prokaryotic pantothenate kinase family.

Its subcellular location is the cytoplasm. The catalysed reaction is (R)-pantothenate + ATP = (R)-4'-phosphopantothenate + ADP + H(+). It participates in cofactor biosynthesis; coenzyme A biosynthesis; CoA from (R)-pantothenate: step 1/5. In Streptococcus pyogenes serotype M5 (strain Manfredo), this protein is Pantothenate kinase.